Consider the following 203-residue polypeptide: Large ribosomal subunit protein bL25 (203 aa).

Belongs to the bacterial ribosomal protein bL25 family. CTC subfamily. Part of the 50S ribosomal subunit; part of the 5S rRNA/L5/L18/L25 subcomplex. Contacts the 5S rRNA. Binds to the 5S rRNA independently of L5 and L18.

Functionally, this is one of the proteins that binds to the 5S RNA in the ribosome where it forms part of the central protuberance. This Xanthobacter autotrophicus (strain ATCC BAA-1158 / Py2) protein is Large ribosomal subunit protein bL25.